We begin with the raw amino-acid sequence, 739 residues long: Phosphoribosylformylglycinamidine synthase subunit PurL (739 aa).

His-54 is an active-site residue. 2 residues coordinate ATP: Tyr-57 and Lys-96. Glu-98 lines the Mg(2+) pocket. Residues 99-102 and Arg-121 contribute to the substrate site; that span reads SHNH. His-100 (proton acceptor) is an active-site residue. A Mg(2+)-binding site is contributed by Asp-122. Gln-245 provides a ligand contact to substrate. Asp-273 contributes to the Mg(2+) binding site. 317–319 provides a ligand contact to substrate; sequence ESQ. Asp-500 and Gly-537 together coordinate ATP. Mg(2+) is bound at residue Asn-538. Ser-540 provides a ligand contact to substrate.

The protein belongs to the FGAMS family. Monomer. Part of the FGAM synthase complex composed of 1 PurL, 1 PurQ and 2 PurS subunits.

It localises to the cytoplasm. It carries out the reaction N(2)-formyl-N(1)-(5-phospho-beta-D-ribosyl)glycinamide + L-glutamine + ATP + H2O = 2-formamido-N(1)-(5-O-phospho-beta-D-ribosyl)acetamidine + L-glutamate + ADP + phosphate + H(+). It participates in purine metabolism; IMP biosynthesis via de novo pathway; 5-amino-1-(5-phospho-D-ribosyl)imidazole from N(2)-formyl-N(1)-(5-phospho-D-ribosyl)glycinamide: step 1/2. In terms of biological role, part of the phosphoribosylformylglycinamidine synthase complex involved in the purines biosynthetic pathway. Catalyzes the ATP-dependent conversion of formylglycinamide ribonucleotide (FGAR) and glutamine to yield formylglycinamidine ribonucleotide (FGAM) and glutamate. The FGAM synthase complex is composed of three subunits. PurQ produces an ammonia molecule by converting glutamine to glutamate. PurL transfers the ammonia molecule to FGAR to form FGAM in an ATP-dependent manner. PurS interacts with PurQ and PurL and is thought to assist in the transfer of the ammonia molecule from PurQ to PurL. In Bacillus cytotoxicus (strain DSM 22905 / CIP 110041 / 391-98 / NVH 391-98), this protein is Phosphoribosylformylglycinamidine synthase subunit PurL.